Reading from the N-terminus, the 256-residue chain is Ribonuclease T2 (256 aa).

The N-terminal stretch at 1–24 (MRPAALRGALLGCLCLALLCLGGA) is a signal peptide. A disulfide bridge links C48 with C55. H65 is an active-site residue. 3 cysteine pairs are disulfide-bonded: C75/C121, C184/C241, and C202/C213. Residues N76 and N106 are each glycosylated (N-linked (GlcNAc...) asparagine). Catalysis depends on residues E114 and H118. N-linked (GlcNAc...) asparagine glycosylation occurs at N212.

Belongs to the RNase T2 family. As to expression, ubiquitous. Higher expression levels observed in the temporal lobe and fetal brain.

The protein resides in the secreted. It is found in the lysosome lumen. The protein localises to the endoplasmic reticulum lumen. It localises to the mitochondrion intermembrane space. It carries out the reaction a ribonucleotidyl-ribonucleotide-RNA + H2O = a 3'-end 3'-phospho-ribonucleotide-RNA + a 5'-end dephospho-ribonucleoside-RNA + H(+). It catalyses the reaction an adenylyl-uridine-RNA = a 3'-end 2',3'-cyclophospho-AMP-RNA + a 5'-end dephospho-uridine-RNA. The catalysed reaction is a guanylyl-uridine-RNA = a 3'-end 2',3'-cyclophospho-GMP-RNA + a 5'-end dephospho-uridine-RNA. Inhibited by Zn(2+) and Cu(2+). Functionally, ribonuclease that plays an essential role in innate immune response by recognizing and degrading RNAs from microbial pathogens that are subsequently sensed by TLR8. Cleaves preferentially single-stranded RNA molecules between purine and uridine residues, which critically contributes to the supply of catabolic uridine and the generation of purine-2',3'-cyclophosphate-terminated oligoribonucleotides. In turn, RNase T2 degradation products promote the RNA-dependent activation of TLR8. In plasmacytoid dendritic cells, it cooperates with PLD3 or PLD4 5'-&gt;3' exonucleases to process RNA fragments and release 2',3'-cyclic guanosine monophosphate (2',3'-cGMP), a potent stimulatory ligand for TLR7. Also plays a key role in degradation of mitochondrial RNA and processing of non-coding RNA imported from the cytosol into mitochondria. Participates as well in degradation of mitochondrion-associated cytosolic rRNAs. The chain is Ribonuclease T2 (RNASET2) from Homo sapiens (Human).